Reading from the N-terminus, the 1755-residue chain is Transposon TyH3 Gag-Pol polyprotein (1755 aa).

Composition is skewed to polar residues over residues 1–23, 48–60, and 127–152; these read MESQ…SVTS, TKAN…TPAS, and QSQF…GNTF. Disordered regions lie at residues 1–93, 126–173, and 352–421; these read MESQ…MMTQ, PQSQ…RPPP, and GSRN…SKST. Residues 153-165 show a composition bias toward low complexity; that stretch reads TDSSSADSDMTST. The RNA-binding stretch occupies residues 299-401; it reads NNGIHINNKV…NSKSKTARAH (103 aa). Low complexity predominate over residues 402 to 418; sequence NVSTSNNSPSTDNDSIS. Serine 416 bears the Phosphoserine mark. Aspartate 461 acts as the For protease activity; shared with dimeric partner in catalysis. The tract at residues 583 to 640 is integrase-type zinc finger-like; the sequence is NVHTSESTRKYPYPFIHRMLAHANAQTIRYSLKNNTITYFNESDVDWSSAIDYQCPDC. The Integrase catalytic domain maps to 660–835; it reads NSYEPFQYLH…AGLDISTLLP (176 aa). Residues aspartate 671 and aspartate 736 each contribute to the Mg(2+) site. 3 disordered regions span residues 956 to 1087, 1092 to 1111, and 1130 to 1187; these read SKAV…ETEK, RSPS…NIVP, and DLPL…DNET. Residues 960–969 are compositionally biased toward low complexity; the sequence is SPTDSTPPST. The segment covering 1005 to 1015 has biased composition (polar residues); it reads STPQISNIEST. The segment covering 1038-1053 has biased composition (basic and acidic residues); it reads ESSHASKSKDFRHSDS. Composition is skewed to polar residues over residues 1054–1082 and 1101–1111; these read YSEN…QISD and PENNSSHNIVP. Positions 1178-1212 match the Bipartite nuclear localization signal motif; that stretch reads KKRSLEDNETEIKVSRDTWNTKNMRSLEPPRSKKR. The Reverse transcriptase Ty1/copia-type domain maps to 1338–1476; the sequence is NNYYITQLDI…DILGLEIKYQ (139 aa). Mg(2+) contacts are provided by aspartate 1346, aspartate 1427, aspartate 1428, aspartate 1610, glutamate 1652, and aspartate 1685. Residues 1610–1752 form the RNase H Ty1/copia-type domain; that stretch reads DASYGNQPYY…IKTFKLLTNK (143 aa).

The capsid protein forms a homotrimer, from which the VLPs are assembled. The protease is a homodimer, whose active site consists of two apposed aspartic acid residues. Initially, virus-like particles (VLPs) are composed of the structural unprocessed proteins Gag and Gag-Pol, and also contain the host initiator methionine tRNA (tRNA(i)-Met) which serves as a primer for minus-strand DNA synthesis, and a dimer of genomic Ty RNA. Processing of the polyproteins occurs within the particle and proceeds by an ordered pathway, called maturation. First, the protease (PR) is released by autocatalytic cleavage of the Gag-Pol polyprotein yielding capsid protein p45 and a Pol-p154 precursor protein. This cleavage is a prerequisite for subsequent processing of Pol-p154 at the remaining sites to release the mature structural and catalytic proteins. Maturation takes place prior to the RT reaction and is required to produce transposition-competent VLPs.

It is found in the cytoplasm. Its subcellular location is the nucleus. It catalyses the reaction DNA(n) + a 2'-deoxyribonucleoside 5'-triphosphate = DNA(n+1) + diphosphate. The enzyme catalyses Endonucleolytic cleavage to 5'-phosphomonoester.. In terms of biological role, capsid protein (CA) is the structural component of the virus-like particle (VLP), forming the shell that encapsulates the retrotransposons dimeric RNA genome. The particles are assembled from trimer-clustered units and there are holes in the capsid shells that allow for the diffusion of macromolecules. CA also has nucleocapsid-like chaperone activity, promoting primer tRNA(i)-Met annealing to the multipartite primer-binding site (PBS), dimerization of Ty1 RNA and initiation of reverse transcription. Functionally, the aspartyl protease (PR) mediates the proteolytic cleavages of the Gag and Gag-Pol polyproteins after assembly of the VLP. Reverse transcriptase/ribonuclease H (RT) is a multifunctional enzyme that catalyzes the conversion of the retro-elements RNA genome into dsDNA within the VLP. The enzyme displays a DNA polymerase activity that can copy either DNA or RNA templates, and a ribonuclease H (RNase H) activity that cleaves the RNA strand of RNA-DNA heteroduplexes during plus-strand synthesis and hydrolyzes RNA primers. The conversion leads to a linear dsDNA copy of the retrotransposon that includes long terminal repeats (LTRs) at both ends. Its function is as follows. Integrase (IN) targets the VLP to the nucleus, where a subparticle preintegration complex (PIC) containing at least integrase and the newly synthesized dsDNA copy of the retrotransposon must transit the nuclear membrane. Once in the nucleus, integrase performs the integration of the dsDNA into the host genome. This is Transposon TyH3 Gag-Pol polyprotein (TY1B) from Saccharomyces cerevisiae (Baker's yeast).